The chain runs to 463 residues: Arginine biosynthesis bifunctional protein ArgJ, chloroplastic (463 aa).

Substrate is bound by residues T207, K233, T244, E331, N458, and T463. Residue T244 is the Nucleophile of the active site.

The protein belongs to the ArgJ family. Heterodimer of an alpha and a beta chain.

It localises to the plastid. The protein localises to the chloroplast. It carries out the reaction N(2)-acetyl-L-ornithine + L-glutamate = N-acetyl-L-glutamate + L-ornithine. The catalysed reaction is L-glutamate + acetyl-CoA = N-acetyl-L-glutamate + CoA + H(+). It participates in amino-acid biosynthesis; L-arginine biosynthesis; L-ornithine and N-acetyl-L-glutamate from L-glutamate and N(2)-acetyl-L-ornithine (cyclic): step 1/1. It functions in the pathway amino-acid biosynthesis; L-arginine biosynthesis; N(2)-acetyl-L-ornithine from L-glutamate: step 1/4. Functionally, catalyzes two activities which are involved in the cyclic version of arginine biosynthesis: the synthesis of acetylglutamate from glutamate and acetyl-CoA, and of ornithine by transacetylation between acetylornithine and glutamate. This is Arginine biosynthesis bifunctional protein ArgJ, chloroplastic from Oryza sativa subsp. japonica (Rice).